Consider the following 232-residue polypeptide: Phosphatidylserine decarboxylase proenzyme (232 aa).

Catalysis depends on Ser190, which acts as the Schiff-base intermediate with substrate; via pyruvic acid. Ser190 bears the Pyruvic acid (Ser); by autocatalysis mark.

It belongs to the phosphatidylserine decarboxylase family. PSD-A subfamily. Heterodimer of a large membrane-associated beta subunit and a small pyruvoyl-containing alpha subunit. It depends on pyruvate as a cofactor. In terms of processing, is synthesized initially as an inactive proenzyme. Formation of the active enzyme involves a self-maturation process in which the active site pyruvoyl group is generated from an internal serine residue via an autocatalytic post-translational modification. Two non-identical subunits are generated from the proenzyme in this reaction, and the pyruvate is formed at the N-terminus of the alpha chain, which is derived from the carboxyl end of the proenzyme. The post-translation cleavage follows an unusual pathway, termed non-hydrolytic serinolysis, in which the side chain hydroxyl group of the serine supplies its oxygen atom to form the C-terminus of the beta chain, while the remainder of the serine residue undergoes an oxidative deamination to produce ammonia and the pyruvoyl prosthetic group on the alpha chain.

The protein localises to the cell membrane. The catalysed reaction is a 1,2-diacyl-sn-glycero-3-phospho-L-serine + H(+) = a 1,2-diacyl-sn-glycero-3-phosphoethanolamine + CO2. It participates in phospholipid metabolism; phosphatidylethanolamine biosynthesis; phosphatidylethanolamine from CDP-diacylglycerol: step 2/2. Catalyzes the formation of phosphatidylethanolamine (PtdEtn) from phosphatidylserine (PtdSer). The sequence is that of Phosphatidylserine decarboxylase proenzyme from Rhizobium rhizogenes (strain K84 / ATCC BAA-868) (Agrobacterium radiobacter).